The chain runs to 89 residues: Small ribosomal subunit protein uS15 (89 aa).

The protein belongs to the universal ribosomal protein uS15 family. As to quaternary structure, part of the 30S ribosomal subunit. Forms a bridge to the 50S subunit in the 70S ribosome, contacting the 23S rRNA.

One of the primary rRNA binding proteins, it binds directly to 16S rRNA where it helps nucleate assembly of the platform of the 30S subunit by binding and bridging several RNA helices of the 16S rRNA. Its function is as follows. Forms an intersubunit bridge (bridge B4) with the 23S rRNA of the 50S subunit in the ribosome. This is Small ribosomal subunit protein uS15 from Marinomonas sp. (strain MWYL1).